We begin with the raw amino-acid sequence, 469 residues long: UDP-N-acetylmuramate--L-alanine ligase (469 aa).

Residue 122–128 (GTHGKTT) participates in ATP binding.

The protein belongs to the MurCDEF family.

Its subcellular location is the cytoplasm. It catalyses the reaction UDP-N-acetyl-alpha-D-muramate + L-alanine + ATP = UDP-N-acetyl-alpha-D-muramoyl-L-alanine + ADP + phosphate + H(+). Its pathway is cell wall biogenesis; peptidoglycan biosynthesis. Functionally, cell wall formation. This Legionella pneumophila subsp. pneumophila (strain Philadelphia 1 / ATCC 33152 / DSM 7513) protein is UDP-N-acetylmuramate--L-alanine ligase.